Consider the following 498-residue polypeptide: Glycerol kinase (498 aa).

T12 contributes to the ADP binding site. Positions 12, 13, and 14 each coordinate ATP. Position 12 (T12) interacts with sn-glycerol 3-phosphate. R16 contacts ADP. Sn-glycerol 3-phosphate-binding residues include R82, E83, Y134, and D243. Glycerol-binding residues include R82, E83, Y134, D243, and Q244. T265 and G308 together coordinate ADP. Positions 265, 308, 312, and 411 each coordinate ATP. Position 411 (G411) interacts with ADP.

Belongs to the FGGY kinase family.

The enzyme catalyses glycerol + ATP = sn-glycerol 3-phosphate + ADP + H(+). Its pathway is polyol metabolism; glycerol degradation via glycerol kinase pathway; sn-glycerol 3-phosphate from glycerol: step 1/1. With respect to regulation, inhibited by fructose 1,6-bisphosphate (FBP). Key enzyme in the regulation of glycerol uptake and metabolism. Catalyzes the phosphorylation of glycerol to yield sn-glycerol 3-phosphate. This Brucella suis biovar 1 (strain 1330) protein is Glycerol kinase.